The following is a 382-amino-acid chain: Chaperone protein DnaJ (382 aa).

The 66-residue stretch at 5-70 folds into the J domain; the sequence is DYYEVLGLKK…QKRAAYDQYG (66 aa). The CR-type zinc finger occupies 134 to 212; it reads GTTKDIQINT…CHGEGRVHKK (79 aa). Zn(2+) contacts are provided by Cys147, Cys150, Cys164, Cys167, Cys186, Cys189, Cys200, and Cys203. CXXCXGXG motif repeat units follow at residues 147 to 154, 164 to 171, 186 to 193, and 200 to 207; these read CDSCGGSG, CPHCHGSG, CPSCHGSG, and CRSCHGEG.

Belongs to the DnaJ family. Homodimer. Zn(2+) is required as a cofactor.

It is found in the cytoplasm. In terms of biological role, participates actively in the response to hyperosmotic and heat shock by preventing the aggregation of stress-denatured proteins and by disaggregating proteins, also in an autonomous, DnaK-independent fashion. Unfolded proteins bind initially to DnaJ; upon interaction with the DnaJ-bound protein, DnaK hydrolyzes its bound ATP, resulting in the formation of a stable complex. GrpE releases ADP from DnaK; ATP binding to DnaK triggers the release of the substrate protein, thus completing the reaction cycle. Several rounds of ATP-dependent interactions between DnaJ, DnaK and GrpE are required for fully efficient folding. Also involved, together with DnaK and GrpE, in the DNA replication of plasmids through activation of initiation proteins. The chain is Chaperone protein DnaJ from Haemophilus influenzae (strain PittGG).